The primary structure comprises 333 residues: tRNA-dihydrouridine(16) synthase (333 aa).

Residues 19 to 21 and Q80 contribute to the FMN site; that span reads PMQ. Catalysis depends on C110, which acts as the Proton donor. FMN-binding positions include K151, 211 to 213, and 235 to 236; these read NGD and GR.

This sequence belongs to the Dus family. DusC subfamily. FMN is required as a cofactor.

It carries out the reaction 5,6-dihydrouridine(16) in tRNA + NADP(+) = uridine(16) in tRNA + NADPH + H(+). The enzyme catalyses 5,6-dihydrouridine(16) in tRNA + NAD(+) = uridine(16) in tRNA + NADH + H(+). Functionally, catalyzes the synthesis of 5,6-dihydrouridine (D), a modified base found in the D-loop of most tRNAs, via the reduction of the C5-C6 double bond in target uridines. Specifically modifies U16 in tRNAs. This Neisseria meningitidis serogroup A / serotype 4A (strain DSM 15465 / Z2491) protein is tRNA-dihydrouridine(16) synthase.